We begin with the raw amino-acid sequence, 422 residues long: UDP-N-acetylglucosamine 1-carboxyvinyltransferase (422 aa).

A phosphoenolpyruvate-binding site is contributed by 22 to 23; the sequence is KN. R94 lines the UDP-N-acetyl-alpha-D-glucosamine pocket. C118 serves as the catalytic Proton donor. At C118 the chain carries 2-(S-cysteinyl)pyruvic acid O-phosphothioketal. Residues 123-127, D309, and I331 contribute to the UDP-N-acetyl-alpha-D-glucosamine site; that span reads RPVDL.

It belongs to the EPSP synthase family. MurA subfamily.

The protein localises to the cytoplasm. The catalysed reaction is phosphoenolpyruvate + UDP-N-acetyl-alpha-D-glucosamine = UDP-N-acetyl-3-O-(1-carboxyvinyl)-alpha-D-glucosamine + phosphate. It participates in cell wall biogenesis; peptidoglycan biosynthesis. In terms of biological role, cell wall formation. Adds enolpyruvyl to UDP-N-acetylglucosamine. The polypeptide is UDP-N-acetylglucosamine 1-carboxyvinyltransferase (Cereibacter sphaeroides (strain ATCC 17025 / ATH 2.4.3) (Rhodobacter sphaeroides)).